The sequence spans 825 residues: Thioredoxin domain-containing protein 16 (825 aa).

The first 27 residues, 1-27 (MFSGFNVFRVGISFVIMCIFYMPTVNS), serve as a signal peptide directing secretion. Residues 392 to 495 (LTVELTEETF…EDLLKFIQLN (104 aa)) enclose the Thioredoxin domain. The cysteines at positions 449 and 456 are disulfide-linked. Asparagine 460 carries N-linked (GlcNAc...) asparagine glycosylation. Residues 762-787 (RKVPKCMKETDVQENDKEQHEDKSAV) form a disordered region. Basic and acidic residues predominate over residues 767 to 787 (CMKETDVQENDKEQHEDKSAV). A Mediates endoplasmic reticulum retention motif is present at residues 816–819 (DKEL).

As to quaternary structure, interacts with FOXRED2. In terms of processing, glycosylated.

The protein resides in the secreted. The protein localises to the endoplasmic reticulum lumen. The sequence is that of Thioredoxin domain-containing protein 16 from Homo sapiens (Human).